The chain runs to 173 residues: Co-chaperone protein HscB homolog (173 aa).

In terms of domain architecture, J spans 2-74; the sequence is NYFELFSLSP…ISRAEHMLSL (73 aa).

The protein belongs to the HscB family. As to quaternary structure, interacts with HscA and stimulates its ATPase activity.

Its function is as follows. Co-chaperone involved in the maturation of iron-sulfur cluster-containing proteins. Seems to help targeting proteins to be folded toward HscA. This chain is Co-chaperone protein HscB homolog, found in Shewanella loihica (strain ATCC BAA-1088 / PV-4).